The chain runs to 194 residues: MSEIKLIVGLGNPGDKYADTRHNAGEWLVERLARRFNFNLKDEAKFFGKTARAVIGGEEVRFLIPTTFMNLSGKAVGALATFYRIKPEEILVIHDELDLPPGVAKIKQGGGHGGHNGLKDTIAQLANNKNFYRLRIGIGHPGDKNLVSAYVLSKPSPIDRSAIDKALDEAASCMEILLKDGITKATNRLNGFKA.

Y17 provides a ligand contact to tRNA. H22 functions as the Proton acceptor in the catalytic mechanism. TRNA-binding residues include F68, N70, and N116.

This sequence belongs to the PTH family. In terms of assembly, monomer.

Its subcellular location is the cytoplasm. The enzyme catalyses an N-acyl-L-alpha-aminoacyl-tRNA + H2O = an N-acyl-L-amino acid + a tRNA + H(+). Its function is as follows. Hydrolyzes ribosome-free peptidyl-tRNAs (with 1 or more amino acids incorporated), which drop off the ribosome during protein synthesis, or as a result of ribosome stalling. Catalyzes the release of premature peptidyl moieties from peptidyl-tRNA molecules trapped in stalled 50S ribosomal subunits, and thus maintains levels of free tRNAs and 50S ribosomes. The chain is Peptidyl-tRNA hydrolase from Mannheimia succiniciproducens (strain KCTC 0769BP / MBEL55E).